The primary structure comprises 63 residues: Large ribosomal subunit protein uL29 (63 aa).

It belongs to the universal ribosomal protein uL29 family.

This is Large ribosomal subunit protein uL29 from Vibrio campbellii (strain ATCC BAA-1116).